A 581-amino-acid chain; its full sequence is Aspartate--tRNA ligase (581 aa).

Glu-170 contacts L-aspartate. Residues 194–197 (QLFK) form an aspartate region. Residue Arg-216 participates in L-aspartate binding. Residues 216–218 (RDE) and Gln-225 each bind ATP. An L-aspartate-binding site is contributed by His-439. Glu-468 is an ATP binding site. Position 475 (Arg-475) interacts with L-aspartate. 520–523 (GFDR) contacts ATP.

The protein belongs to the class-II aminoacyl-tRNA synthetase family. Type 1 subfamily. As to quaternary structure, homodimer.

It localises to the cytoplasm. It catalyses the reaction tRNA(Asp) + L-aspartate + ATP = L-aspartyl-tRNA(Asp) + AMP + diphosphate. In terms of biological role, catalyzes the attachment of L-aspartate to tRNA(Asp) in a two-step reaction: L-aspartate is first activated by ATP to form Asp-AMP and then transferred to the acceptor end of tRNA(Asp). In Thermosipho melanesiensis (strain DSM 12029 / CIP 104789 / BI429), this protein is Aspartate--tRNA ligase.